The chain runs to 139 residues: ATP synthase epsilon chain (139 aa).

Belongs to the ATPase epsilon chain family. As to quaternary structure, F-type ATPases have 2 components, CF(1) - the catalytic core - and CF(0) - the membrane proton channel. CF(1) has five subunits: alpha(3), beta(3), gamma(1), delta(1), epsilon(1). CF(0) has three main subunits: a, b and c.

The protein resides in the cell inner membrane. Produces ATP from ADP in the presence of a proton gradient across the membrane. In Marinomonas sp. (strain MWYL1), this protein is ATP synthase epsilon chain.